The sequence spans 139 residues: Acyl carrier protein 4, chloroplastic (139 aa).

Residues Met1–Cys55 constitute a chloroplast transit peptide. The 76-residue stretch at Pro59–Met134 folds into the Carrier domain. Ser94 carries the post-translational modification O-(pantetheine 4'-phosphoryl)serine.

This sequence belongs to the acyl carrier protein (ACP) family. In terms of processing, 4'-phosphopantetheine is transferred from CoA to a specific serine of apo-ACP by acpS. This modification is essential for activity because fatty acids are bound in thioester linkage to the sulfhydryl of the prosthetic group.

The protein localises to the plastid. Its subcellular location is the chloroplast. Its pathway is lipid metabolism; fatty acid biosynthesis. Carrier of the growing fatty acid chain in fatty acid biosynthesis. The chain is Acyl carrier protein 4, chloroplastic (ACL1) from Cuphea lanceolata (Cigar flower).